The primary structure comprises 492 residues: MSVVISIDVGTTRVKVIAFSKNGKIVAISDREVSQIYPEPGWVEQDPLELWEAVRKSLSEVIQQVGLKEINSIGITNQRETVILWDKETGRPVYNAILWQDLRTEDICRKLSEYSEYIKENTGLLLHPYFSASKVNWIIENVNGVKKDIERGKVIFGTVDTWILWNLTGGKVHKTEPSNASRTLLFNIKRLEYDDELLKIFRIPKNILPEVNESSSLFGYTDKSITGVEIPITGILGDQQASLFAHGIRELEEVKNTYGTGLFLMLLTGSKPIIPERLLGTVAWVINGKVNYAIEGSVLTGGACIKWLMDRLKLIKQAADTEYLAKSISSNEGVYFVPAFSGLGAPYWDASARGIIIGITGRTRIEHIARAALEAIAYQTRDVIEEMEKETGVKIKILKADGGASQNNFLMQFQADILGIPVERPRHVELTALGAAGIAGIYSGMWKSKEEFIEDTREVELTFSPEMKKEERELYYSKWKDAVKRAMKWSML.

An ADP-binding site is contributed by threonine 11. Positions 11 and 12 each coordinate ATP. A sn-glycerol 3-phosphate-binding site is contributed by threonine 11. An ADP-binding site is contributed by lysine 15. Sn-glycerol 3-phosphate-binding residues include arginine 79, glutamate 80, tyrosine 129, and aspartate 238. Positions 79, 80, 129, 238, and 239 each coordinate glycerol. ADP is bound by residues threonine 260, glycine 302, glycine 403, and asparagine 407. Residues threonine 260, glycine 302, and glycine 403 each coordinate ATP.

This sequence belongs to the FGGY kinase family.

It carries out the reaction glycerol + ATP = sn-glycerol 3-phosphate + ADP + H(+). It functions in the pathway polyol metabolism; glycerol degradation via glycerol kinase pathway; sn-glycerol 3-phosphate from glycerol: step 1/1. Its activity is regulated as follows. Inhibited by fructose 1,6-bisphosphate (FBP). Key enzyme in the regulation of glycerol uptake and metabolism. Catalyzes the phosphorylation of glycerol to yield sn-glycerol 3-phosphate. The protein is Glycerol kinase of Aquifex aeolicus (strain VF5).